Here is a 417-residue protein sequence, read N- to C-terminus: Inhibitor of growth protein 3 (417 aa).

Disordered regions lie at residues 126–165, 177–198, and 284–320; these read LDTPSQPVNNHHVHSHSLGEKRKHNPSSHHSTTDHVSEKK, SDASKENTAGCRNNLSSSSTNN, and QTLTSSATTDSRSGRKSKSNNKSASQQSSSSSSSSSL. The segment covering 136 to 152 has biased composition (basic residues); it reads HHVHSHSLGEKRKHNPS. Residues 156 to 165 are compositionally biased toward basic and acidic residues; sequence STTDHVSEKK. The segment covering 177 to 187 has biased composition (polar residues); it reads SDASKENTAGC. 3 stretches are compositionally biased toward low complexity: residues 189–198, 284–294, and 303–320; these read NNLSSSSTNN, QTLTSSATTDS, and NNKSASQQSSSSSSSSSL. The PHD-type zinc finger occupies 359 to 408; the sequence is PRYCICNQVSYGEMVGCDNQDCPIEWFHYGCVGLSEAPKGKWYCPQCTAA. Zn(2+) contacts are provided by Cys362, Cys364, Cys375, Cys380, His386, Cys389, Cys402, and Cys405.

It belongs to the ING family. Interacts with H3K4me3 and to a lesser extent with H3K4me2. Component of the NuA4 histone acetyltransferase complex.

It localises to the nucleus. In terms of biological role, component of the NuA4 histone acetyltransferase (HAT) complex which is involved in transcriptional activation of select genes principally by acetylation of nucleosomal histone H4 and H2A. This modification may both alter nucleosome - DNA interactions and promote interaction of the modified histones with other proteins which positively regulate transcription. NuA4 may also play a direct role in DNA repair when directly recruited to sites of DNA damage. The polypeptide is Inhibitor of growth protein 3 (ing3) (Xenopus tropicalis (Western clawed frog)).